Consider the following 614-residue polypeptide: Probable glycerol-3-phosphate dehydrogenase (614 aa).

Residue Asp57–Asp85 coordinates FAD. The tract at residues Met595–Lys614 is disordered. The segment covering Pro598–Lys614 has biased composition (basic and acidic residues).

The protein belongs to the FAD-dependent glycerol-3-phosphate dehydrogenase family. The cofactor is FAD.

The protein resides in the cytoplasm. The catalysed reaction is a quinone + sn-glycerol 3-phosphate = dihydroxyacetone phosphate + a quinol. The protein operates within polyol metabolism; glycerol degradation via glycerol kinase pathway; glycerone phosphate from sn-glycerol 3-phosphate (anaerobic route): step 1/1. The protein is Probable glycerol-3-phosphate dehydrogenase of Encephalitozoon cuniculi (strain GB-M1) (Microsporidian parasite).